The sequence spans 462 residues: Integrator complex subunit 12 (462 aa).

The disordered stretch occupies residues 42–132; that stretch reads GIDSSYRPSQ…PETQSSPITV (91 aa). Positions 59–86 are enriched in polar residues; sequence ISSTKNISIKQEPKISSSLPSGNNNGKV. Lysine 68 is covalently cross-linked (Glycyl lysine isopeptide (Lys-Gly) (interchain with G-Cter in SUMO2)). Basic and acidic residues predominate over residues 88–124; sequence TTEKVKKEAEKRPADKMKSDITEGVDIPKKPRLEKPE. Residue serine 128 is modified to Phosphoserine. The PHD-type zinc finger occupies 159 to 215; sequence GLACVVCRQMMVASGNQLVECQECHNLYHRDCHKPQVTDKEANDPRLVWYCARCTRQ. Residue lysine 254 forms a Glycyl lysine isopeptide (Lys-Gly) (interchain with G-Cter in SUMO2) linkage. Residues 301 to 328 are compositionally biased toward polar residues; it reads SSAGPSTAKLSSTTQNNTGKPATSSANQ. Residues 301–462 are disordered; sequence SSAGPSTAKL…KKAAQKKLKK (162 aa). Composition is skewed to low complexity over residues 347–358 and 382–437; these read KIGSNNSTTPTV and VSKV…GPTS. The span at 449-462 shows a compositional bias: basic residues; sequence QMVKKKAAQKKLKK.

It belongs to the Integrator subunit 12 family. In terms of assembly, component of the Integrator complex, composed of core subunits INTS1, INTS2, INTS3, INTS4, INTS5, INTS6, INTS7, INTS8, INTS9/RC74, INTS10, INTS11/CPSF3L, INTS12, INTS13, INTS14 and INTS15. The core complex associates with protein phosphatase 2A subunits PPP2CA and PPP2R1A, to form the Integrator-PP2A (INTAC) complex. In terms of processing, dephosphorylated at Ser-128 by the PNUTS-PP1 complex, promoting RNA polymerase II transcription pause-release.

It is found in the nucleus. In terms of biological role, component of the integrator complex, a multiprotein complex that terminates RNA polymerase II (Pol II) transcription in the promoter-proximal region of genes. The integrator complex provides a quality checkpoint during transcription elongation by driving premature transcription termination of transcripts that are unfavorably configured for transcriptional elongation: the complex terminates transcription by (1) catalyzing dephosphorylation of the C-terminal domain (CTD) of Pol II subunit POLR2A/RPB1 and SUPT5H/SPT5, (2) degrading the exiting nascent RNA transcript via endonuclease activity and (3) promoting the release of Pol II from bound DNA. The integrator complex is also involved in terminating the synthesis of non-coding Pol II transcripts, such as enhancer RNAs (eRNAs), small nuclear RNAs (snRNAs), telomerase RNAs and long non-coding RNAs (lncRNAs). Mediates recruitment of cytoplasmic dynein to the nuclear envelope, probably as component of the integrator complex. This chain is Integrator complex subunit 12, found in Homo sapiens (Human).